Consider the following 66-residue polypeptide: Large ribosomal subunit protein uL29 (66 aa).

The protein belongs to the universal ribosomal protein uL29 family.

The polypeptide is Large ribosomal subunit protein uL29 (Geobacillus thermodenitrificans (strain NG80-2)).